Reading from the N-terminus, the 89-residue chain is Double-stranded DNA-binding protein (89 aa).

Homodimer.

Its function is as follows. May play a role in transcription of several T4 genes. Binds double-stranded DNA and interacts preferentially with T4 late promoter regions. The polypeptide is Double-stranded DNA-binding protein (dsbA) (Enterobacteria phage T4 (Bacteriophage T4)).